A 357-amino-acid polypeptide reads, in one-letter code: DNA replication and repair protein RecF (357 aa).

30–37 (GANGSGKT) serves as a coordination point for ATP.

The protein belongs to the RecF family.

The protein localises to the cytoplasm. Its function is as follows. The RecF protein is involved in DNA metabolism; it is required for DNA replication and normal SOS inducibility. RecF binds preferentially to single-stranded, linear DNA. It also seems to bind ATP. The chain is DNA replication and repair protein RecF from Escherichia coli O6:K15:H31 (strain 536 / UPEC).